The chain runs to 636 residues: MTTSALRRQVKNIVHNYSEAEIKVREATSNDPWGPPSSLMSEIADLTFNTVAFAEVMGMVWRRLNDSGKNWRHVYKALTLLDYLLKTGSERVAHQCRENLYTIQTLKDFQYIDRDGKDQGVNVREKVKQVMALLKDEERLRQERTHALKTKERMALEGMGIGSGQLGYSRRSRGSPSSYTSASSSPRYASDLEQARPQTSGEEELQLQLALAMSREEAERPVPPASHRDEDLQLQLALSLSRQEHEKGVRSWKGDDSPVANGAEPAGQRRQRDREPEREERKEEEKLKTSQSSILDLADIFAPAPALPSTHCSADPWDIPGLRPNTEPSGSSWGPSADPWSPVPSGNALSRSQPWDLLPTLSSSEPWGRTPVLPSGPPIADPWAPSSPTRKLPSTGADPWGASMETSDTSALGGASPFDPFAKPLESTEPKESRDSAQALPTGKSPSTVELDPFGDSSPSCKQNGMKEPEALDLGVLGEALPQQPGKEARPCRTPESFLGPSASSLVNLDSLVKAPLAARTRNPFLTGLGVPSPTNPFGAGDQGRPTLNQMRTGSPALGLPPGGPVGAPVGSMTYSASLPLPLSSVPVGATLPASVSVFPQAGAFAPPPASLPQPLLPTSGPMGPLPPQAGTNPFL.

Residues Arg-8, Lys-11, Arg-25, Asn-30, Arg-63, and His-73 each contribute to the a 1,2-diacyl-sn-glycero-3-phospho-(1D-myo-inositol-4,5-bisphosphate) site. In terms of domain architecture, ENTH spans 12-144 (NIVHNYSEAE…KDEERLRQER (133 aa)). The tract at residues 153-503 (RMALEGMGIG…TPESFLGPSA (351 aa)) is disordered. Residues 174–189 (GSPSSYTSASSSPRYA) are compositionally biased toward low complexity. Phosphoserine occurs at positions 184 and 185. 2 UIM domains span residues 202–221 (EEEL…AERP) and 229–248 (DEDL…HEKG). Composition is skewed to basic and acidic residues over residues 214–231 (SREE…RDED) and 242–256 (RQEH…KGDD). Ser-257 is subject to Phosphoserine. The segment covering 270–288 (RQRDREPEREERKEEEKLK) has biased composition (basic and acidic residues). A run of 5 repeats spans residues 315-317 (DPW), 338-340 (DPW), 365-367 (EPW), 381-383 (DPW), and 398-400 (DPW). Residues 315 to 400 (DPWDIPGLRP…KLPSTGADPW (86 aa)) form a 5 X 3 AA repeats of [DE]-P-W region. Positions 426–435 (ESTEPKESRD) are enriched in basic and acidic residues. Tandem repeats lie at residues 523–525 (NPF) and 536–538 (NPF). The interval 523–635 (NPFLTGLGVP…LPPQAGTNPF (113 aa)) is 3 X 3 AA repeats of N-P-F. The span at 607–616 (PPPASLPQPL) shows a compositional bias: pro residues. Positions 607 to 636 (PPPASLPQPLLPTSGPMGPLPPQAGTNPFL) are disordered. Repeat 3 spans residues 633 to 635 (NPF).

Belongs to the epsin family.

It localises to the cytoplasm. Its subcellular location is the cell cortex. The protein resides in the perinuclear region. It is found in the cytoplasmic vesicle. The protein localises to the clathrin-coated vesicle. This is Epsin-3 (Epn3) from Mus musculus (Mouse).